Reading from the N-terminus, the 80-residue chain is Sulfur carrier protein TusA (80 aa).

Residue C17 is the Cysteine persulfide intermediate of the active site.

This sequence belongs to the sulfur carrier protein TusA family.

The protein localises to the cytoplasm. In terms of biological role, sulfur carrier protein which probably makes part of a sulfur-relay system. The protein is Sulfur carrier protein TusA of Pseudomonas putida (strain W619).